Reading from the N-terminus, the 1331-residue chain is MTKEKPAVFYNRIIDKGRLKKLMSWAYTSFGSAHCATMADELKTLGFRYATQAGVSISVDDLQVPPIKRQMLDSAEQEIKTTEARYSRGEITEVERFQKVIDTWNSTSESLKDEVVKNFRETNPLNSVYMMAFSGARGNLSQVRQLVGMRGLMADPQGEIIDLPIKTNFREGLTVTEYIISSYGARKGLVDTALRTADSGYLTRRLVDVSQDVIVREEDCGTARGLKLRAMTDGEREQISLEDRLFGRVLNADVVDPKTGEVIAQRNQDIDADLAKKIATTVAEVEVRSPLTCEAARSVCRKCYGWSLAHGHMVDMGEAVGIIAAQSIGEPGTQLTMRTFHTGGVFTKEAARTIKASKAGTIQFKDGLSTRRMRTPHGDEVEQVEVAGTLVLKPSDNGKMVSHALSPGSFVLVAEGASVKKGDLLVEVGAGQKTQKSTERATKDVSSDLAGEVLFDNLIAEEKTDRQGNTTRSAQRSGLMWVLAGDVYNLPAGAEPVVENGTHVNVGDILAETKLVSLSGGVVRLIPNSREIEIVTASVLLDEAKVLHETGGGSEQYIIETSKGDQFLLKTAPGTKVQNNANIAELIDDRYRTTTGGIIKYSGVEVAKGTKKQGYEVLKGGTLLWIPEETHEVNKDSSLRIVEDGQYVEAGTEVVKDIFSQSAGVAEVIEKNDILREVIIKPGELHLTEEAIADKYHEQLIQPGEEVIPGVTIDKLSYGEKVISTEGVALLVRPVEEFQVEDTPVEPSQGSINEQGAGRNIELHAVQRLFFKDGERVKSVDGVSLLSTQLIIEIGAIEGEDEDVLANLYADIELQDDPTDDEVKRLQLVILESLILRRDSDSDPFGGQVQTRLMVEDGQEIVPGAVVARTEIQCKEPGEVRGIRSGQEAIRRLLIVRDSDRQTLAIDGKAKVKENTLVVAGTEIAEGVVIEDSAQVLKVSDKEIVLRHARPYRVSGGAVLHIDEGDLVQRGDNLVLLVFERAKTGDIIQGLPRIEELLEARKPKEAAVLARRPGTCQVEYLDDETVDVKVIEDDGVISEYPVSLNQSVMVVDGQRVGPAEPLTDGLNNPHEILEIFFDYYAESKGIYEAALIGLRESQRFLVEEVQRVYQSQGIDISDKHIEVIVRQMTAKVRIDDGGDTTMLPGELIELRQVEQVNEAMSITGGAPARYTPVLLGITKASLNTDSFISAASFQETTRVLTEAAIEGKSDWLRGLKENVIIGRLIPAGTGFASQNDFVDEGTSRSPNGYSNVVTNDNGAGLSSRTYDDLDGSEILDDQTARAFTEGKSNRKDIISGDELISDDTPIPSDVQGKAPVIDDDAMIDDNWMKDQ.

Cys-220, Cys-293, Cys-300, and Cys-303 together coordinate Zn(2+). Disordered stretches follow at residues 1236–1257 (DFVD…TNDN) and 1294–1331 (ISGD…MKDQ). The segment covering 1243-1257 (SRSPNGYSNVVTNDN) has biased composition (polar residues).

This sequence belongs to the RNA polymerase beta' chain family. RpoC2 subfamily. In terms of assembly, in cyanobacteria the RNAP catalytic core is composed of 2 alpha, 1 beta, 1 beta', 1 gamma and 1 omega subunit. When a sigma factor is associated with the core the holoenzyme is formed, which can initiate transcription. Zn(2+) is required as a cofactor.

It carries out the reaction RNA(n) + a ribonucleoside 5'-triphosphate = RNA(n+1) + diphosphate. DNA-dependent RNA polymerase catalyzes the transcription of DNA into RNA using the four ribonucleoside triphosphates as substrates. The sequence is that of DNA-directed RNA polymerase subunit beta' from Picosynechococcus sp. (strain ATCC 27264 / PCC 7002 / PR-6) (Agmenellum quadruplicatum).